We begin with the raw amino-acid sequence, 262 residues long: Acidic leucine-rich nuclear phosphoprotein 32 family member B (262 aa).

LRR repeat units lie at residues 16 to 40 (PGEVKELVLDNCRSDDGKIVGLSSD), 43 to 64 (NLEFLSMINVNLLSISNLPKLN), 65 to 87 (KLRKLELSDNRISGGLEVLAERT), and 89 to 110 (NLTHLNLSGNKIKDINTLEPLK). The 39-residue stretch at 123–161 (CEVTMLINYRESVFTLLPQLTYLDGFDADEQEAPDSDPE) folds into the LRRCT domain. Residues 150 to 233 (ADEQEAPDSD…EDEEDDEADD (84 aa)) show a composition bias toward acidic residues. A disordered region spans residues 150-262 (ADEQEAPDSD…PEDEEDDEDD (113 aa)). The Nuclear localization signal motif lies at 240 to 243 (KRKR). Residues 247–262 (DEGEEDPEDEEDDEDD) show a composition bias toward acidic residues.

Belongs to the ANP32 family. In terms of assembly, interacts with histones H3 and H4. Interacts with KLF5; this interaction induces promoter region-specific histone incorporation and inhibition of histone acetylation by ANP32B. Directly cleaved by caspase-3/CASP3.

The protein localises to the nucleus. Multifunctional protein that is involved in the regulation of many processes including cell proliferation, apoptosis, cell cycle progression or transcription. Regulates the proliferation of neuronal stem cells, differentiation of leukemic cells and progression from G1 to S phase of the cell cycle. As negative regulator of caspase-3-dependent apoptosis, may act as an antagonist of ANP32A in regulating tissue homeostasis. Exhibits histone chaperone properties, able to recruit histones to certain promoters, thus regulating the transcription of specific genes. Also plays an essential role in the nucleocytoplasmic transport of specific mRNAs via the uncommon nuclear mRNA export receptor XPO1/CRM1. The polypeptide is Acidic leucine-rich nuclear phosphoprotein 32 family member B (ANP32B) (Gallus gallus (Chicken)).